The sequence spans 94 residues: DNA-directed RNA polymerase subunit Rpo11 (94 aa).

This sequence belongs to the archaeal Rpo11/eukaryotic RPB11/RPC19 RNA polymerase subunit family. Part of the RNA polymerase complex.

The protein localises to the cytoplasm. It catalyses the reaction RNA(n) + a ribonucleoside 5'-triphosphate = RNA(n+1) + diphosphate. In terms of biological role, DNA-dependent RNA polymerase (RNAP) catalyzes the transcription of DNA into RNA using the four ribonucleoside triphosphates as substrates. In Haloarcula marismortui (strain ATCC 43049 / DSM 3752 / JCM 8966 / VKM B-1809) (Halobacterium marismortui), this protein is DNA-directed RNA polymerase subunit Rpo11.